A 126-amino-acid polypeptide reads, in one-letter code: Large ribosomal subunit protein bL17c (126 aa).

A chloroplast-targeting transit peptide spans 1-10 (MIDNGGRFFA).

Component of the chloroplast large ribosomal subunit (LSU). Mature 70S chloroplast ribosomes of higher plants consist of a small (30S) and a large (50S) subunit. The 30S small subunit contains 1 molecule of ribosomal RNA (16S rRNA) and 24 different proteins. The 50S large subunit contains 3 rRNA molecules (23S, 5S and 4.5S rRNA) and 33 different proteins.

It is found in the plastid. The protein localises to the chloroplast. Functionally, component of the chloroplast ribosome (chloro-ribosome), a dedicated translation machinery responsible for the synthesis of chloroplast genome-encoded proteins, including proteins of the transcription and translation machinery and components of the photosynthetic apparatus. The polypeptide is Large ribosomal subunit protein bL17c (RPL17) (Spinacia oleracea (Spinach)).